We begin with the raw amino-acid sequence, 927 residues long: Alpha-catenin-like protein hmp-1 (927 aa).

Coiled coils occupy residues 319 to 354 (TREN…RRDD) and 672 to 696 (QENQ…QIDI). The interval 901-927 (RNEIETGRDSDDEELDRRHQQRINGRL) is disordered.

It belongs to the vinculin/alpha-catenin family. As to quaternary structure, component of a core catenin-cadherin complex consisting of hmr-1, hmp-1 and hmp-2; the complex localizes to adherens junctions. May interact with hmp-2. As to expression, epidermal cells.

The protein localises to the cell junction. It localises to the adherens junction. The protein resides in the cytoplasm. Its function is as follows. Required for cell migration during body enclosure and cell shape changes during body elongation. Required for proper localization of other junctional components, such as pac-1. This chain is Alpha-catenin-like protein hmp-1 (hmp-1), found in Caenorhabditis elegans.